A 240-amino-acid polypeptide reads, in one-letter code: Nudix hydrolase 3 (240 aa).

One can recognise a Nudix hydrolase domain in the interval 50 to 190; the sequence is NSAMSVLIPL…RMKYTLPSFD (141 aa). A Nudix box motif is present at residues 89 to 110; the sequence is GRMDPGETTTETALRETFEEIG. Mg(2+) contacts are provided by Glu-104 and Glu-108.

It belongs to the Nudix hydrolase family. PCD1 subfamily. The cofactor is Mn(2+). Requires Mg(2+) as cofactor.

Functionally, probably mediates the hydrolysis of some nucleoside diphosphate derivatives. The sequence is that of Nudix hydrolase 3 (ndx-3) from Caenorhabditis elegans.